Reading from the N-terminus, the 1093-residue chain is Regulatory protein SWI4 (1093 aa).

The HTH APSES-type domain maps to Ile-37 to Pro-147. The H-T-H motif DNA-binding region spans Ile-71–Glu-92. The segment at Phe-138–Asn-210 is disordered. The segment covering Asn-152 to Lys-172 has biased composition (polar residues). Residues Ser-179–Asn-201 show a composition bias toward low complexity. Residue Ser-255 is modified to Phosphoserine. Low complexity predominate over residues Asn-448–Met-457. The interval Asn-448–Gln-468 is disordered. The span at Thr-458–Gln-468 shows a compositional bias: polar residues. ANK repeat units follow at residues Gln-520–Gln-549 and Ile-641–Ile-670. Residue Ser-806 is modified to Phosphoserine. 2 disordered regions span residues Arg-813–Leu-855 and Gln-973–Phe-1017. Residues Ser-818–Pro-837 show a composition bias toward basic and acidic residues. Positions Pro-846–Leu-855 are enriched in low complexity. Residues Lys-1000–Asn-1010 show a composition bias toward polar residues.

As to quaternary structure, component of the transcription complex SCB-binding factor (SBF) composed of SWI6 and SWI4. Interacts with MSA2.

Part of a complex involved in cell-cycle-dependent transcription. SWI4 and SWI6 are required for formation of the cell-cycle box factor-DNA complex. The repeated element in the upstream region of HO (5'-CACGAAAA-3') is called the cell cycle box (CCB). The sequence is that of Regulatory protein SWI4 (SWI4) from Saccharomyces cerevisiae (strain ATCC 204508 / S288c) (Baker's yeast).